The primary structure comprises 564 residues: uncharacterized protein (564 aa).

The segment covering 1 to 17 (MRRPSTASLTRTPSRAS) has biased composition (polar residues). The interval 1 to 564 (MRRPSTASLT…ASTPSSEVIS (564 aa)) is disordered. Low complexity-rich tracts occupy residues 79-97 (SPRT…RASP) and 114-134 (SPTG…ASPT). Over residues 153–168 (RSPSTASLTRTPSRAS) the composition is skewed to polar residues. The span at 170 to 179 (TRWPPRASPT) shows a compositional bias: low complexity. The segment covering 250–271 (GSPPRASPMTPPRASPRTPPRA) has biased composition (pro residues). Positions 272–299 (SPTTTPSRASLTRTPSWASPTTTPSRAS) are enriched in low complexity. Positions 318 to 351 (PTGTPSRASPTGTPSRASLTGSPSRASLTGTPSR) are enriched in polar residues. Residues 378–416 (RASLTGTSSTASLTRTPSRASLTRTQSSSSLTRTPSMAS) show a composition bias toward low complexity. Polar residues predominate over residues 467–564 (SRASLTRTPS…ASTPSSEVIS (98 aa)).

This is an uncharacterized protein from Homo sapiens (Human).